Reading from the N-terminus, the 326-residue chain is Archaeal actin homolog (326 aa).

ATP contacts are provided by residues Tyr-10 to Lys-14, Ser-179, Gln-231, Gly-285 to Asn-288, and Gln-311.

It belongs to the thermophilic archaeal actin family.

Its function is as follows. Polymerizes into bundles of filaments, forming a helix with a filament width of 5.5 nm and an axial repeating unit of 5.5 nm. Polymerization of Ta0583 requires NTP and is optimal with ATP, but GTP, UTP, CTP, and even the deoxy form of NTP can also support the polymerization reaction. Nucleoside diphosphate or AMP-PNP does not support polymerization. This chain is Archaeal actin homolog, found in Thermoplasma acidophilum (strain ATCC 25905 / DSM 1728 / JCM 9062 / NBRC 15155 / AMRC-C165).